We begin with the raw amino-acid sequence, 361 residues long: Phospho-N-acetylmuramoyl-pentapeptide-transferase (361 aa).

Transmembrane regions (helical) follow at residues 25 to 45 (RAVL…PWVI), 73 to 93 (TMGG…WADL), 97 to 117 (YVWL…YDDW), 134 to 154 (MFWQ…TASL), 168 to 188 (VIYP…IVGT), 200 to 220 (GLAA…AYVA), 240 to 260 (VAVF…FNAY), 264 to 284 (VFMG…VAVI), 289 to 309 (IVLF…MIQV), and 338 to 358 (QVVV…LSTL).

Belongs to the glycosyltransferase 4 family. MraY subfamily. The cofactor is Mg(2+).

The protein localises to the cell inner membrane. The enzyme catalyses UDP-N-acetyl-alpha-D-muramoyl-L-alanyl-gamma-D-glutamyl-meso-2,6-diaminopimeloyl-D-alanyl-D-alanine + di-trans,octa-cis-undecaprenyl phosphate = di-trans,octa-cis-undecaprenyl diphospho-N-acetyl-alpha-D-muramoyl-L-alanyl-D-glutamyl-meso-2,6-diaminopimeloyl-D-alanyl-D-alanine + UMP. The protein operates within cell wall biogenesis; peptidoglycan biosynthesis. Catalyzes the initial step of the lipid cycle reactions in the biosynthesis of the cell wall peptidoglycan: transfers peptidoglycan precursor phospho-MurNAc-pentapeptide from UDP-MurNAc-pentapeptide onto the lipid carrier undecaprenyl phosphate, yielding undecaprenyl-pyrophosphoryl-MurNAc-pentapeptide, known as lipid I. In Laribacter hongkongensis (strain HLHK9), this protein is Phospho-N-acetylmuramoyl-pentapeptide-transferase.